Here is a 740-residue protein sequence, read N- to C-terminus: Transcription activator of gluconeogenesis NCU03938 (740 aa).

The interval 1-66 (MPDDVGPAEA…KYDPKDPLRP (66 aa)) is disordered. Residues 19–37 (SDNEYDETEVTTKDDDDEK) are compositionally biased toward acidic residues. Over residues 52–65 (GDQKKKYDPKDPLR) the composition is skewed to basic and acidic residues. Residues 75-103 (CYACQRAHLTCGDERPCQRCIKRGLAEAC) constitute a DNA-binding region (zn(2)-C6 fungal-type). Disordered stretches follow at residues 333–405 (PAGP…RQRD), 532–579 (NSDT…KEQP), and 639–674 (APTASGGSGSSNGTVVNGGPDSSPAGKTEKERPTGV). Residues 337–351 (TSLQSPSTENNSPQP) show a composition bias toward polar residues. The 72-residue stretch at 475 to 546 (ALFEHEEFMH…SISSKGGRGG (72 aa)) folds into the PAS domain. The span at 639-658 (APTASGGSGSSNGTVVNGGP) shows a compositional bias: low complexity.

It belongs to the ERT1/acuK family.

It is found in the nucleus. In terms of biological role, transcription factor which regulates nonfermentable carbon utilization. Activator of gluconeogenetic genes. This Neurospora crassa (strain ATCC 24698 / 74-OR23-1A / CBS 708.71 / DSM 1257 / FGSC 987) protein is Transcription activator of gluconeogenesis NCU03938.